The following is a 132-amino-acid chain: Small ribosomal subunit protein uS8c (132 aa).

This sequence belongs to the universal ribosomal protein uS8 family. In terms of assembly, part of the 30S ribosomal subunit.

It is found in the plastid. Its subcellular location is the chloroplast. Functionally, one of the primary rRNA binding proteins, it binds directly to 16S rRNA central domain where it helps coordinate assembly of the platform of the 30S subunit. This Staurastrum punctulatum (Green alga) protein is Small ribosomal subunit protein uS8c (rps8).